The sequence spans 315 residues: 4-hydroxy-3-methylbut-2-enyl diphosphate reductase (315 aa).

Cys-12 contributes to the [4Fe-4S] cluster binding site. Residues His-43 and His-81 each coordinate (2E)-4-hydroxy-3-methylbut-2-enyl diphosphate. 2 residues coordinate dimethylallyl diphosphate: His-43 and His-81. Isopentenyl diphosphate-binding residues include His-43 and His-81. Residue Cys-103 coordinates [4Fe-4S] cluster. His-131 lines the (2E)-4-hydroxy-3-methylbut-2-enyl diphosphate pocket. His-131 lines the dimethylallyl diphosphate pocket. His-131 is a binding site for isopentenyl diphosphate. Glu-133 (proton donor) is an active-site residue. Thr-170 contributes to the (2E)-4-hydroxy-3-methylbut-2-enyl diphosphate binding site. Cys-198 contacts [4Fe-4S] cluster. Positions 226, 228, and 271 each coordinate (2E)-4-hydroxy-3-methylbut-2-enyl diphosphate. The dimethylallyl diphosphate site is built by Ser-226, Asn-228, and Ser-271. The isopentenyl diphosphate site is built by Ser-226, Asn-228, and Ser-271.

It belongs to the IspH family. [4Fe-4S] cluster is required as a cofactor.

The enzyme catalyses isopentenyl diphosphate + 2 oxidized [2Fe-2S]-[ferredoxin] + H2O = (2E)-4-hydroxy-3-methylbut-2-enyl diphosphate + 2 reduced [2Fe-2S]-[ferredoxin] + 2 H(+). The catalysed reaction is dimethylallyl diphosphate + 2 oxidized [2Fe-2S]-[ferredoxin] + H2O = (2E)-4-hydroxy-3-methylbut-2-enyl diphosphate + 2 reduced [2Fe-2S]-[ferredoxin] + 2 H(+). The protein operates within isoprenoid biosynthesis; dimethylallyl diphosphate biosynthesis; dimethylallyl diphosphate from (2E)-4-hydroxy-3-methylbutenyl diphosphate: step 1/1. It participates in isoprenoid biosynthesis; isopentenyl diphosphate biosynthesis via DXP pathway; isopentenyl diphosphate from 1-deoxy-D-xylulose 5-phosphate: step 6/6. Functionally, catalyzes the conversion of 1-hydroxy-2-methyl-2-(E)-butenyl 4-diphosphate (HMBPP) into a mixture of isopentenyl diphosphate (IPP) and dimethylallyl diphosphate (DMAPP). Acts in the terminal step of the DOXP/MEP pathway for isoprenoid precursor biosynthesis. The sequence is that of 4-hydroxy-3-methylbut-2-enyl diphosphate reductase from Bacillus cytotoxicus (strain DSM 22905 / CIP 110041 / 391-98 / NVH 391-98).